Here is a 199-residue protein sequence, read N- to C-terminus: DnaJ homolog subfamily C member 5B (199 aa).

Phosphoserine is present on residues Ser-14 and Ser-16. Residues 19–84 (ALYEILGLHK…SKRNIYDKYG (66 aa)) form the J domain.

Interacts with the chaperone complex consisting of HSC70 and SGTA. Post-translationally, palmitoylated.

The protein resides in the membrane. In Sus scrofa (Pig), this protein is DnaJ homolog subfamily C member 5B (DNAJC5B).